The sequence spans 534 residues: MSDTTLNVSLASQGYPEPAELFANLGTAPLVEHAVRNGEGLLCVDGPLVVETGKHTGRSAKDKFIVRDAETENTVWWGKTNVAMSPEHFAALKADFIKALGEKDRLYVADLFGGSQPEHRVKVRVINELAWHNLFIRTLLVRPTTDELASFVPEYTIIDLPSFRADPARHGSRSETVIAVNFTEKLILIGGTAYAGEMKKSVFGILNYLLPVKGVMPMHCSANVGPDGKTAVFFGLSGTGKTTLSADASRTLIGDDEHGWSDTAVFNFEGGCYAKMIRLSAEAEPEIFATTKRFGTVLENVVIDPVTRTIDLDDNSLAENSRGSYPIDFIPNASEENLGPVPANLIFLTADAYGVLPPIARLTPDQAMYHFLSGYTARVAGTEIGVTEPEATFSTCFGAPFMPRHPSVYGNLLKERIAKGGVKCWLVNTGWSGGKATQEGIKRMPIKATRALLNAALDGSLNSATFTKDPNFGFEVPVEVPGVDTKLLDPRGAWADGEEYDKTAQELVRKFVDNFQQFADHVDQSVRDAAPVAA.

Positions 58, 194, and 200 each coordinate substrate. ATP-binding positions include Lys200, His219, and 235–243 (GLSGTGKTT). Residues Lys200 and His219 each coordinate Mn(2+). Residue Asp256 coordinates Mn(2+). ATP-binding residues include Glu284, Arg322, and Thr449. Arg322 is a binding site for substrate.

Belongs to the phosphoenolpyruvate carboxykinase (ATP) family. Mn(2+) is required as a cofactor.

The protein resides in the cytoplasm. It carries out the reaction oxaloacetate + ATP = phosphoenolpyruvate + ADP + CO2. The protein operates within carbohydrate biosynthesis; gluconeogenesis. In terms of biological role, involved in the gluconeogenesis. Catalyzes the conversion of oxaloacetate (OAA) to phosphoenolpyruvate (PEP) through direct phosphoryl transfer between the nucleoside triphosphate and OAA. The sequence is that of Phosphoenolpyruvate carboxykinase (ATP) from Novosphingobium aromaticivorans (strain ATCC 700278 / DSM 12444 / CCUG 56034 / CIP 105152 / NBRC 16084 / F199).